Consider the following 383-residue polypeptide: Adaptive-response sensory kinase SasA (383 aa).

In terms of domain architecture, Histidine kinase spans 152-365 (MVAHELRTPL…CFTFTVPIWQ (214 aa)). A Phosphohistidine; by autocatalysis modification is found at histidine 155.

Homooligomerizes. Interacts with KaiC. Participates in the KaiABC clock complex, whose core is composed of a KaiC homohexamer, 6 KaiB and up to 6 KaiA dimers. SasA and KaiB(fs) compete to bind to KaiC.

The catalysed reaction is ATP + protein L-histidine = ADP + protein N-phospho-L-histidine.. In terms of biological role, member of the two-component regulatory system SasA/RpaA involved in genome-wide circadian gene expression. One of several clock output pathways. Participates in the Kai clock protein complex, the main circadian regulator in cyanobacteria, via its interaction with KaiC. KaiC enhances the autophosphorylation activity of SasA, which then transfers its phosphate group to RpaA to activate it. In addition to its output function, recruits fold-shifted KaiB (KaiB(fs)) to KaiC to cooperatively form the KaiB(6):KaiC(6) complex (independent of SasA kinase activity). Required for robustness of the circadian rhythm of gene expression and is involved in clock output, also required for adaptation to light/dark cycles. The sequence is that of Adaptive-response sensory kinase SasA from Parasynechococcus marenigrum (strain WH8102).